The sequence spans 236 residues: Putative lipoprotein MlpA (236 aa).

An N-terminal signal peptide occupies residues 1–21 (MTKNIVNTALVLVGAGSLLTG). A lipid anchor (N-palmitoyl cysteine) is attached at Cys-22. Cys-22 carries the S-diacylglycerol cysteine lipid modification.

It is found in the cell membrane. The chain is Putative lipoprotein MlpA (mlpA) from Myxococcus xanthus.